A 543-amino-acid chain; its full sequence is Coiled-coil domain-containing protein 9 (543 aa).

2 stretches are compositionally biased toward basic and acidic residues: residues 38-47 (IEEDRKKAEL) and 59-72 (RSME…EEKS). Residues 38–543 (IEEDRKKAEL…SGEAWPFANA (506 aa)) form a disordered region. Residue Thr94 is modified to Phosphothreonine. An omega-N-methylarginine mark is found at Arg106, Arg120, Arg126, and Arg128. Asymmetric dimethylarginine occurs at positions 129, 131, and 133. The residue at position 135 (Ser135) is a Phosphoserine. Basic and acidic residues-rich tracts occupy residues 146–183 (TSDR…REGV), 192–212 (FLDD…DRRE), and 225–239 (DFER…ERQG). Residues 147–183 (SDRKSKEWEERRRQNIEKMNEEMEKIAEYERNQREGV) are a coiled coil. 2 positions are modified to phosphoserine: Ser246 and Ser253. Basic and acidic residues-rich tracts occupy residues 256-277 (GRER…QERL), 287-300 (WRRE…DGMF), 309-318 (ELSHRYDDQA), and 359-372 (YSDH…REEA). Phosphoserine is present on residues Ser374 and Ser384. The span at 376-394 (APESSQSISLEETPTQASE) shows a compositional bias: polar residues. Positions 405–453 (EDGEEDVGEEEEGEEEGEDEEDEEWEDVSEDVTEEEEEEEEEFEEDEEG) are enriched in acidic residues. The stretch at 422–452 (EDEEDEEWEDVSEDVTEEEEEEEEEFEEDEE) forms a coiled coil. Ser533 carries the post-translational modification Phosphoserine.

As to quaternary structure, probable component of the exon junction complex (EJC); the association is RNA-dependent.

In terms of biological role, probable component of the exon junction complex (EJC), a multiprotein complex that associates immediately upstream of the exon-exon junction on mRNAs and serves as a positional landmark for the intron exon structure of genes and directs post-transcriptional processes in the cytoplasm such as mRNA export, nonsense-mediated mRNA decay (NMD) or translation. This chain is Coiled-coil domain-containing protein 9 (Ccdc9), found in Mus musculus (Mouse).